The chain runs to 240 residues: Ribosomal RNA small subunit methyltransferase G (240 aa).

S-adenosyl-L-methionine contacts are provided by residues glycine 79, phenylalanine 84, 130 to 131 (AE), and arginine 149.

This sequence belongs to the methyltransferase superfamily. RNA methyltransferase RsmG family.

The protein resides in the cytoplasm. Specifically methylates the N7 position of a guanine in 16S rRNA. This Lactobacillus helveticus (strain DPC 4571) protein is Ribosomal RNA small subunit methyltransferase G.